The primary structure comprises 96 residues: GTPase HRas (96 aa).

Met-1 is modified (N-acetylmethionine). Thr-2 is modified (N-acetylthreonine; in GTPase HRas, N-terminally processed). 10–17 (GAGGVGKS) is a GTP binding site. Residues 32–40 (YDPTIEDSY) carry the Effector region motif. 57–61 (DTAGQ) serves as a coordination point for GTP.

Belongs to the small GTPase superfamily. Ras family. In its GTP-bound form interacts with PLCE1. Interacts with TBC1D10C. Interacts with RGL3. Interacts with HSPD1. Found in a complex with at least BRAF, HRAS, MAP2K1, MAPK3 and RGS14. Interacts (active GTP-bound form) with RGS14 (via RBD 1 domain). Forms a signaling complex with RASGRP1 and DGKZ. Interacts with RASSF5. Interacts with PDE6D. Interacts with IKZF3. Interacts with RACK1. Interacts with PIK3CG; the interaction is required for membrane recruitment and beta-gamma G protein dimer-dependent activation of the PI3K gamma complex PIK3CG:PIK3R6. Interacts with RAPGEF2. Interacts (active GTP-bound form) with both SHOC2 and PP1c (all isoforms) to form a tertiary complex; SHOC2 and PP1c preferably bind M-Ras/MRAS, but they also bind K-Ras/KRAS, N-Ras/NRAS and H-Ras/HRAS. Interacts (in GTP-bound form) with Oog1. Interacts (GTP-bound form) with MAPKAP1/SIN1; inhibiting H-Ras/HRAS activity. In terms of processing, ubiquitinated by the BCR(LZTR1) E3 ubiquitin ligase complex at Lys-170 in a non-degradative manner, leading to inhibit Ras signaling by decreasing Ras association with membranes.

It localises to the cell membrane. Its subcellular location is the golgi apparatus. It is found in the golgi apparatus membrane. It carries out the reaction GTP + H2O = GDP + phosphate + H(+). Alternates between an inactive form bound to GDP and an active form bound to GTP. Activated by a guanine nucleotide-exchange factor (GEF) and inactivated by a GTPase-activating protein (GAP). In terms of biological role, ras proteins bind GDP/GTP and possess intrinsic GTPase activity. This Mesocricetus auratus (Golden hamster) protein is GTPase HRas (HRAS).